Reading from the N-terminus, the 386-residue chain is O-methyltransferase 12 (386 aa).

S207, G231, D254, D274, and K288 together coordinate S-adenosyl-L-homocysteine. D254 serves as a coordination point for S-adenosyl-L-methionine. H292 functions as the Proton acceptor in the catalytic mechanism.

The protein belongs to the class I-like SAM-binding methyltransferase superfamily. Cation-independent O-methyltransferase family. In terms of assembly, homodimer. As to expression, expressed at high levels in all tissues.

The catalysed reaction is 4-hydroxy-3,5-dimethoxyphenethylamine + S-adenosyl-L-methionine = mescaline + S-adenosyl-L-homocysteine + H(+). It carries out the reaction dopamine + S-adenosyl-L-methionine = 4-methoxytyramine + S-adenosyl-L-homocysteine + H(+). Its pathway is aromatic compound metabolism. The protein operates within alkaloid biosynthesis. O-methyltransferase participating in the biosynthesis of natural products derived from phenylethylamine, including mescaline, a natural hallucinogen potentially used in psychotherapeutic treatments. Catalyzes the O-methylation of dopamine, 4-hydroxy-3,5-dimethoxyphenethylamine, 4,5-dihydroxy-3-methoxyphenethylamine and N-methyl-4,5-dihydroxy-3-methoxyphenethylamine. Also involved in the conversion of N-methyl-4-hydroxy-3,5-dimethoxyphenethylamine to N-methylmescaline. The polypeptide is O-methyltransferase 12 (Lophophora williamsii (Peyote)).